Consider the following 493-residue polypeptide: Inosine-5'-monophosphate dehydrogenase (493 aa).

CBS domains are found at residues Val-97 to Ile-155 and Met-159 to Glu-219. NAD(+)-binding positions include Asp-253 and Gly-303 to Gly-305. Residues Gly-305 and Gly-307 each contribute to the K(+) site. Ser-308 provides a ligand contact to IMP. K(+) is bound at residue Cys-310. Cys-310 functions as the Thioimidate intermediate in the catalytic mechanism. IMP is bound by residues Asp-343–Gly-345, Gly-366–Ser-367, and Tyr-390–Gly-394. The active-site Proton acceptor is Arg-406. Glu-421 is an IMP binding site. K(+)-binding residues include Glu-475, Ser-476, and His-477.

It belongs to the IMPDH/GMPR family. As to quaternary structure, homotetramer. The cofactor is K(+).

The catalysed reaction is IMP + NAD(+) + H2O = XMP + NADH + H(+). It functions in the pathway purine metabolism; XMP biosynthesis via de novo pathway; XMP from IMP: step 1/1. With respect to regulation, mycophenolic acid (MPA) is a non-competitive inhibitor that prevents formation of the closed enzyme conformation by binding to the same site as the amobile flap. In contrast, mizoribine monophosphate (MZP) is a competitive inhibitor that induces the closed conformation. MPA is a potent inhibitor of mammalian IMPDHs but a poor inhibitor of the bacterial enzymes. MZP is a more potent inhibitor of bacterial IMPDH. In terms of biological role, catalyzes the conversion of inosine 5'-phosphate (IMP) to xanthosine 5'-phosphate (XMP), the first committed and rate-limiting step in the de novo synthesis of guanine nucleotides, and therefore plays an important role in the regulation of cell growth. This Streptococcus pyogenes serotype M1 protein is Inosine-5'-monophosphate dehydrogenase.